Here is a 411-residue protein sequence, read N- to C-terminus: UPF0761 membrane protein PSPA7_4558 (411 aa).

The next 6 helical transmembrane spans lie at 36–56 (LFAV…IPAF), 92–112 (HLTW…LVTI), 132–152 (FLLY…GFAV), 174–194 (LLGL…YSAV), 207–229 (GGMF…VSLF), and 244–264 (IFLL…VLVC).

This sequence belongs to the UPF0761 family.

Its subcellular location is the cell inner membrane. The sequence is that of UPF0761 membrane protein PSPA7_4558 from Pseudomonas paraeruginosa (strain DSM 24068 / PA7) (Pseudomonas aeruginosa (strain PA7)).